We begin with the raw amino-acid sequence, 158 residues long: HTH-type transcriptional repressor NicR (158 aa).

The HTH marR-type domain maps to 20–152 (TEQVGHLLRK…ILYLLRKMID (133 aa)). Positions 66–89 (QAELIKATAVDQATIRGIVERLKA) form a DNA-binding region, H-T-H motif.

Its pathway is cofactor degradation; nicotinate degradation [regulation]. Its function is as follows. Transcriptional repressor for the nicCDEFTP and nicXR operons, encoding the lower aerobic nicotinate degradation pathway. Acts under non-induced conditions: repression of the nicCDEFTP and nicXR operons becomes alleviated in presence of 6-hydroxynicotinate (6HNA). The sequence is that of HTH-type transcriptional repressor NicR (nicR) from Pseudomonas putida (strain ATCC 47054 / DSM 6125 / CFBP 8728 / NCIMB 11950 / KT2440).